The primary structure comprises 424 residues: Enolase (424 aa).

Q165 is a (2R)-2-phosphoglycerate binding site. The active-site Proton donor is the E207. Mg(2+) contacts are provided by D244, E283, and D310. (2R)-2-phosphoglycerate is bound by residues K335, R364, S365, and K386. Catalysis depends on K335, which acts as the Proton acceptor.

This sequence belongs to the enolase family. Mg(2+) is required as a cofactor.

Its subcellular location is the cytoplasm. The protein resides in the secreted. The protein localises to the cell surface. The enzyme catalyses (2R)-2-phosphoglycerate = phosphoenolpyruvate + H2O. The protein operates within carbohydrate degradation; glycolysis; pyruvate from D-glyceraldehyde 3-phosphate: step 4/5. In terms of biological role, catalyzes the reversible conversion of 2-phosphoglycerate (2-PG) into phosphoenolpyruvate (PEP). It is essential for the degradation of carbohydrates via glycolysis. This is Enolase from Chlamydia trachomatis serovar D (strain ATCC VR-885 / DSM 19411 / UW-3/Cx).